A 343-amino-acid chain; its full sequence is Protein RecA (343 aa).

64–71 (GPESSGKT) serves as a coordination point for ATP.

It belongs to the RecA family.

It localises to the cytoplasm. Can catalyze the hydrolysis of ATP in the presence of single-stranded DNA, the ATP-dependent uptake of single-stranded DNA by duplex DNA, and the ATP-dependent hybridization of homologous single-stranded DNAs. It interacts with LexA causing its activation and leading to its autocatalytic cleavage. The protein is Protein RecA of Bacillus cereus (strain ATCC 10987 / NRS 248).